The chain runs to 144 residues: MLLPKRVKWRRVQRGRLKGKSKGGNSVAFGEYGLQALEAAWITSRQIEAARIAMTRYIKRGGKVWIKIFPDKPITAKPAETRMGSGKGSPEYWVAVVKPGRIMFELAGVPEDTAKEAMRLAMHKLPIKCKFVKREEVGGEANES.

The protein belongs to the universal ribosomal protein uL16 family. As to quaternary structure, part of the 50S ribosomal subunit.

Its function is as follows. Binds 23S rRNA and is also seen to make contacts with the A and possibly P site tRNAs. This chain is Large ribosomal subunit protein uL16, found in Heliobacterium modesticaldum (strain ATCC 51547 / Ice1).